The primary structure comprises 240 residues: Caffeoyl-CoA O-methyltransferase 5 (240 aa).

Lys-14 contacts substrate. S-adenosyl-L-methionine contacts are provided by residues Thr-56, Glu-78, 80 to 81 (GV), Ser-86, Asp-104, and Ala-133. Asp-156 lines the substrate pocket. Position 156 (Asp-156) interacts with a divalent metal cation. Asp-158 serves as a coordination point for S-adenosyl-L-methionine. Positions 182 and 183 each coordinate a divalent metal cation. Asn-187 contacts substrate.

This sequence belongs to the class I-like SAM-binding methyltransferase superfamily. Cation-dependent O-methyltransferase family. CCoAMT subfamily. The cofactor is Mg(2+). As to expression, expression steadily increases from the bottom to the top of the plant.

The catalysed reaction is (E)-caffeoyl-CoA + S-adenosyl-L-methionine = (E)-feruloyl-CoA + S-adenosyl-L-homocysteine + H(+). Its pathway is aromatic compound metabolism; phenylpropanoid biosynthesis. Its function is as follows. Methylates caffeoyl-CoA to feruloyl-CoA and 5-hydroxyferuloyl-CoA to sinapoyl-CoA. Plays a role in the synthesis of feruloylated polysaccharides. Involved in the reinforcement of the plant cell wall. Also involved in the responding to wounding or pathogen challenge by the increased formation of cell wall-bound ferulic acid polymers. Methylates 5-hydroxyferulolyl-CoA more efficiently than caffeoyl-CoA. This is Caffeoyl-CoA O-methyltransferase 5 (CCOAOMT5) from Nicotiana tabacum (Common tobacco).